The following is a 258-amino-acid chain: Glucanase inhibitor protein 1 (258 aa).

The signal sequence occupies residues 1–19; the sequence is MRVVPTLAAASLALGAVAG. The 228-residue stretch at 27 to 254 folds into the Peptidase S1 domain; that stretch reads ILGGGEVPIG…AIEWITSVTK (228 aa). Residues Cys54 and Cys70 are joined by a disulfide bond. Residues Asn87, Asn102, Asn107, Asn157, and Asn185 are each glycosylated (N-linked (GlcNAc...) asparagine). 2 disulfides stabilise this stretch: Cys177/Cys189 and Cys199/Cys230.

The protein belongs to the peptidase S1 family. In terms of assembly, forms an apoplastic complex with host endoglucanases in tomato leaves during P.infestans infection.

Its subcellular location is the secreted. Its function is as follows. Secreted effector that suppresses host plant glucan elicitor-mediated defense responses. Targets host endoglucanases and inhibits the endoglucanase-mediated release of elicitor-active glucan oligosaccharides from P.infestans cell walls. The protein is Glucanase inhibitor protein 1 of Phytophthora infestans (Potato late blight agent).